An 833-amino-acid chain; its full sequence is P protein (833 aa).

Residues methionine 1–arginine 172 are Cytoplasmic-facing. The helical transmembrane segment at tryptophan 173 to tyrosine 193 threads the bilayer. Residues proline 194 to glutamine 325 are Extracellular-facing. N-linked (GlcNAc...) asparagine glycosylation is found at asparagine 210, asparagine 214, and asparagine 269. The helical transmembrane segment at valine 326 to histidine 346 threads the bilayer. Over arginine 347–threonine 348 the chain is Cytoplasmic. A helical membrane pass occupies residues leucine 349 to proline 369. Residues serine 370–glutamate 381 lie on the Extracellular side of the membrane. A helical transmembrane segment spans residues threonine 382–phenylalanine 402. The Cytoplasmic segment spans residues aspartate 403–valine 417. A helical transmembrane segment spans residues tryptophan 418–valine 438. The Extracellular segment spans residues threonine 439–alanine 501. The helical transmembrane segment at glycine 502–leucine 522 threads the bilayer. At arginine 523–leucine 617 the chain is on the cytoplasmic side. A helical transmembrane segment spans residues leucine 618–valine 638. Position 639 (proline 639) is a topological domain, extracellular. Residues glycine 640–alanine 660 form a helical membrane-spanning segment. Residues aspartate 661–alanine 675 are Cytoplasmic-facing. A helical transmembrane segment spans residues threonine 676–valine 696. Over glutamate 697–alanine 718 the chain is Extracellular. Residues alanine 719–phenylalanine 739 traverse the membrane as a helical segment. Topologically, residues threonine 740 to proline 759 are cytoplasmic. A helical transmembrane segment spans residues alanine 760–isoleucine 780. Over glycine 781–proline 810 the chain is Extracellular. The chain crosses the membrane as a helical span at residues valine 811 to glycine 831. At tryptophan 832–asparagine 833 the chain is on the cytoplasmic side.

Belongs to the CitM (TC 2.A.11) transporter family. Most abundant in melanocytes. Also present in neonatal and adult eye tissue presumably as a result of expression in the retinal pigmented epithelium and choroid body, known sites of melanogenesis in the eye. Small but detectable amounts also observed in fetal, neonatal and adult brain. Moderate amounts detected in adult testis and ovary. Not detected in heart, kidney, spleen, liver or thymus.

It localises to the melanosome membrane. The enzyme catalyses chloride(in) = chloride(out). Its function is as follows. Contributes to a melanosome-specific anion (chloride) current that modulates melanosomal pH for optimal tyrosinase activity required for melanogenesis and the melanosome maturation. One of the components of the mammalian pigmentary system. May serve as a key control point at which color variation is determined. Major determinant of eye color. Seems to regulate the post-translational processing of tyrosinase, which catalyzes the limiting reaction in melanin synthesis. The polypeptide is P protein (Oca2) (Mus musculus (Mouse)).